The following is a 38-amino-acid chain: TTINVKCSLPQQCLRPCKDRFGQHAGGKCINGKCKCYP.

3 disulfide bridges follow: Cys-7–Cys-29, Cys-13–Cys-34, and Cys-17–Cys-36.

Expressed by the venom gland.

It localises to the secreted. Inhibits human voltage-gated potassium (Kv) channels Kv1.2/KCNA2 and Kv1.3/KCNA3. Does not block human Kv1.1/KCNA1 at 100nM concentration. In Centruroides bonito (Scorpion), this protein is Potassium channel toxin alpha-KTx 2.21.